The following is a 445-amino-acid chain: Methyl-CpG-binding domain protein 4-like protein (445 aa).

Aspartate 429 is a catalytic residue.

As to expression, isoform 1 and isoform 4: Expressed in leaves and flowers, but not in roots or stems.

Its subcellular location is the nucleus. Monofunctional DNA glycosylase targeting U:G and T:G mispairs. Excises uracil derivatives and exhibits a preference for a CpG sequence context, irrespective of the methylation status of the complementary strand. The activity follows a biphasic kinetics, with an initial burst of product accumulation followed by a slower phase. Specifically binds its reaction product. Triggers the base excision repair (BER) pathway. In Arabidopsis thaliana (Mouse-ear cress), this protein is Methyl-CpG-binding domain protein 4-like protein.